Reading from the N-terminus, the 858-residue chain is Conidiophore development regulator abaA (858 aa).

The tract at residues 1–22 is disordered; sequence MSSSLYHPRPVLSSQRYTPSPD. A DNA-binding region (TEA) is located at residues 128 to 221; it reads QKDKGGVWRR…QVVKKFFEDL (94 aa). Basic and acidic residues predominate over residues 500–522; that stretch reads VEHQRKKEKRTKGDDRKNLDRAG. 2 disordered regions span residues 500–535 and 792–858; these read VEHQ…GDAA and TGAG…AGGW. The Nuclear localization signal motif lies at 514 to 521; it reads DRKNLDRA. A compositionally biased stretch (polar residues) spans 809 to 822; that stretch reads SSDQTALWTQSQWA.

The protein belongs to the TEC1 family.

The protein localises to the nucleus. In terms of biological role, abaA and wetA are pivotal regulators of conidiophore development and conidium maturation. They act individually and together to regulate their own expression and that of numerous other sporulation-specific genes. Binds to the sequence 5'-CATTCY-3', where Y is a pyrimidine, making both major- and minor-groove contacts. Plays a pivotal role in conidiation by regulating cell cycle pathways and other conidiation-related genes. This is Conidiophore development regulator abaA from Gibberella zeae (strain ATCC MYA-4620 / CBS 123657 / FGSC 9075 / NRRL 31084 / PH-1) (Wheat head blight fungus).